Reading from the N-terminus, the 193-residue chain is Flagellar transcriptional regulator FlhC (193 aa).

Zn(2+) contacts are provided by cysteine 138, cysteine 141, cysteine 158, and cysteine 161.

Belongs to the FlhC family. Heterohexamer composed of two FlhC and four FlhD subunits. Each FlhC binds a FlhD dimer, forming a heterotrimer, and a hexamer assembles by dimerization of two heterotrimers. It depends on Zn(2+) as a cofactor.

The protein resides in the cytoplasm. Functions in complex with FlhD as a master transcriptional regulator that regulates transcription of several flagellar and non-flagellar operons by binding to their promoter region. Activates expression of class 2 flagellar genes, including fliA, which is a flagellum-specific sigma factor that turns on the class 3 genes. Also regulates genes whose products function in a variety of physiological pathways. This Yersinia enterocolitica protein is Flagellar transcriptional regulator FlhC.